The following is a 159-amino-acid chain: Putative ribosomal RNA large subunit methyltransferase H (159 aa).

S-adenosyl-L-methionine is bound by residues Leu-76, Gly-108, and 127–132 (FSKMTF).

It belongs to the RNA methyltransferase RlmH family.

It is found in the cytoplasm. The catalysed reaction is pseudouridine(1915) in 23S rRNA + S-adenosyl-L-methionine = N(3)-methylpseudouridine(1915) in 23S rRNA + S-adenosyl-L-homocysteine + H(+). In terms of biological role, specifically methylates the pseudouridine at position 1915 (m3Psi1915) in 23S rRNA. In Methanococcus maripaludis (strain C5 / ATCC BAA-1333), this protein is Putative ribosomal RNA large subunit methyltransferase H.